Consider the following 199-residue polypeptide: Recombination protein RecR (199 aa).

A C4-type zinc finger spans residues 57-72 (CSICFNLTDTDPCAIC). The region spanning 80–175 (RLLMVVEEAK…KVTRIAHGLP (96 aa)) is the Toprim domain.

It belongs to the RecR family.

May play a role in DNA repair. It seems to be involved in an RecBC-independent recombinational process of DNA repair. It may act with RecF and RecO. In Carboxydothermus hydrogenoformans (strain ATCC BAA-161 / DSM 6008 / Z-2901), this protein is Recombination protein RecR.